The sequence spans 95 residues: MSYTIAAQVRTEIGKGSSRRLRHAKKVPAVIYGPGKEAISIVFDHKDIINIQENQDFYTSELTIALEGKDVKVRVQDMQRHAFKPMIEHVDFKFA.

Belongs to the bacterial ribosomal protein bL25 family. As to quaternary structure, part of the 50S ribosomal subunit; part of the 5S rRNA/L5/L18/L25 subcomplex. Contacts the 5S rRNA. Binds to the 5S rRNA independently of L5 and L18.

In terms of biological role, this is one of the proteins that binds to the 5S RNA in the ribosome where it forms part of the central protuberance. The protein is Large ribosomal subunit protein bL25 of Shewanella pealeana (strain ATCC 700345 / ANG-SQ1).